We begin with the raw amino-acid sequence, 935 residues long: MSSKSSAWQVELPVHRLERNLIFLPGITYRVVFDKQKALDLASRWSAKERSERVAAIASRFGLSSKHLVACVPGYPDSDTCTVCVVNGFYEMSETTVVSFKGVTRGYIVQSDEDTATVEIQEETSVPHPDTKDMIRLFDNIDQFLTYYKDEGTLDSEDKEERSRHILLRLTPLATLLNAQLSASDVSAGLKRLRQAYGRKSGDFAHYNDVLVALFPFPIELKISYLRSKGAERIEVFNKCVAFANKVFEEHLDTSYLAEIWSSLDHHSSKAQSNVSRSQFISNHLRNLRRLVEEMGLMRVTGRGSRTAEDNDENKSIQDFVDSLDKYLINEDGKRLIAKDFERLKQMQSSSSDYQVLRAYLEIIMDLPWQRLDSFVESVNVDLARAREQLDADHYGMESAKERILEYLAVLNLHNQKQPRHEPEFVYGTGDEPTTKERPASTLKAPILLLTGPPGVGKTSLARSIATTLGRKFQRISVGGLNDFADLKGHRRTYVGAIPGLIVQALRRSQSMNPVILLDEVDKIGSNSRKGDPEAALLEILDPEQNTNFHDHYIGFPIDLSQILFVCTSNDLWQLSDPLRDRMEVIELAGYNYMEKVEISKKYLIPRQLERAGLSSDAVAMDDETILKMATHYTSEPGIRNLERLIAAICRGKAVERQMGEATKTVTVHDLAKYIGSPSHLRATAAGETKFQKGYGVVNGLSYNSDGSGSLLRFEMIGLPGSQKMNCTGRLGEVLLESSQIANTLVGYLLHNNLVAGTQEFRDELLKRYENTSVHLHVPEGAISKDGPSAGITMTLCLMSLVLRKKVPETLAMTGEITLTGKVLPIGGVREKLLGAHLAGKVNKVLLPRQNRKDVIEDFIYNLRNRELAKELFAKFLDEEEQLLKEGRTHAGEPEKWVYQTLGLEIVYVDDFSDVLASVWEGEVLLTGGIREARI.

A Lon N-terminal domain is found at 12-296; it reads LPVHRLERNL…NLRRLVEEMG (285 aa). 452 to 459 contributes to the ATP binding site; that stretch reads GPPGVGKT. The Lon proteolytic domain occupies 692–922; that stretch reads QKGYGVVNGL…SDVLASVWEG (231 aa). Active-site residues include Ser789 and Lys832. A Microbody targeting signal motif is present at residues 933 to 935; the sequence is ARI.

This sequence belongs to the peptidase S16 family.

It is found in the peroxisome matrix. The enzyme catalyses Hydrolysis of proteins in presence of ATP.. Functionally, ATP-dependent serine protease that mediates the selective degradation of misfolded and unassembled polypeptides in the peroxisomal matrix. Necessary for type 2 peroxisome targeting signal (PTS2)-containing protein processing and facilitates peroxisome matrix protein import. The protein is Lon protease homolog 2, peroxisomal (PLN) of Pichia angusta (Yeast).